The following is a 181-amino-acid chain: Avenin-like a6 (181 aa).

The N-terminal stretch at 1 to 19 (MKNLFILALLAFTATSAVA) is a signal peptide.

Belongs to the prolamin family. In terms of processing, contains 7 disulfide bonds.

Functionally, seed storage protein. Not integrated in the gluten polymer through disulfide bonds, unless incorporated by reduction and reoxidation during dough making. Increases dough strength and bread volume, but decreases dough stability when added into a base wheat flour. This is Avenin-like a6 from Triticum aestivum (Wheat).